Here is an 80-residue protein sequence, read N- to C-terminus: CDC42 small effector protein 1 (80 aa).

Residues Cys10 and Cys11 are each lipidated (S-palmitoyl cysteine). Residues 30-43 (IGEPMNFVHLTHIG) enclose the CRIB domain. The segment at 48-80 (GAGDGLAMTGAVQEQMRSKGNHRDRPWSNSRAL) is disordered.

Belongs to the CDC42SE/SPEC family. In terms of assembly, interacts with CDC42 (in GTP-bound form). Interacts weakly with RAC1 and not at all with RHOA.

It localises to the cytoplasm. The protein localises to the cytoskeleton. It is found in the cell membrane. Probably involved in the organization of the actin cytoskeleton by acting downstream of CDC42, inducing actin filament assembly. Alters CDC42-induced cell shape changes. In activated T-cells, may play a role in CDC42-mediated F-actin accumulation at the immunological synapse. May play a role in early contractile events in phagocytosis in macrophages. The sequence is that of CDC42 small effector protein 1 (Cdc42se1) from Mus musculus (Mouse).